A 660-amino-acid chain; its full sequence is Anoctamin-10 (660 aa).

The Cytoplasmic portion of the chain corresponds to 1-207 (MKVTLSALDT…DSIRGYFGET (207 aa)). Residues 208–228 (IALYFGFLEYFTFALIPMAVI) form a helical membrane-spanning segment. Topologically, residues 229 to 240 (GLPYYLFVWEDY) are extracellular. A helical transmembrane segment spans residues 241 to 261 (DKYVIFASFNLIWSTVILELW). Residues 262-316 (KRGCANMTYRWGTLLMKRKFEEPRPGFHGVLGINSITGKEEPLYPSYKRQLRIYL) are Cytoplasmic-facing. The helical transmembrane segment at 317-337 (VSLPFVCLCLYFSLYVMMIYF) threads the bilayer. At 338 to 352 (DMEVWALGLHENSGS) the chain is on the extracellular side. The chain crosses the membrane as a helical span at residues 353-373 (EWTSVLLYVPSIIYAIVIEIM). The Cytoplasmic segment spans residues 374 to 400 (NRLYRYAAEFLTSWENHRLESAYQNHL). Residues 401–421 (ILKVLVFNFLNCFASLFYIAF) form a helical membrane-spanning segment. At 422 to 500 (VLKDMKLLRQ…YLGTFDDYLE (79 aa)) the chain is on the extracellular side. The chain crosses the membrane as a helical span at residues 501–521 (LFLQFGYVSLFSCVYPLAAAF). Residues 522 to 553 (AVLNNFTEVNSDALKMCRVFKRPFSEPSANIG) are Cytoplasmic-facing. A helical transmembrane segment spans residues 554–574 (VWQLAFETMSVISVVTNCALI). At 575–590 (GMSPQVNAVFPESKAD) the chain is on the extracellular side. The chain crosses the membrane as a helical span at residues 591 to 611 (LILIVVAVEHALLALKFILAF). Over 612–660 (AIPDKPRHIQMKLARLEFESLEALKQQQMKLVTENLKEEPMESGKEKAT) the chain is Cytoplasmic.

This sequence belongs to the anoctamin family. In terms of tissue distribution, highly expressed in the brain. Intermediate levels in the retina and heart and low levels in the placenta, liver, lung, duodenum, kidney, testis and spleen. In brain areas, highest expression in the frontal and occipital cortices and in the cerebellum. Lower expression in the fetal brain than in the adult brain.

It is found in the cell membrane. In terms of biological role, does not exhibit calcium-activated chloride channel (CaCC) activity. Can inhibit the activity of ANO1. The chain is Anoctamin-10 (ANO10) from Homo sapiens (Human).